Reading from the N-terminus, the 708-residue chain is DNA ligase (708 aa).

NAD(+) is bound by residues 35 to 39 (DADYD), 84 to 85 (SL), and Glu-118. The N6-AMP-lysine intermediate role is filled by Lys-120. Residues Arg-141, Glu-182, Lys-303, and Lys-327 each coordinate NAD(+). Residues Cys-419, Cys-422, Cys-437, and Cys-443 each coordinate Zn(2+). Positions 628–708 (TRASEVSGKT…GWAKIVADAQ (81 aa)) constitute a BRCT domain.

Belongs to the NAD-dependent DNA ligase family. LigA subfamily. The cofactor is Mg(2+). Mn(2+) serves as cofactor.

The enzyme catalyses NAD(+) + (deoxyribonucleotide)n-3'-hydroxyl + 5'-phospho-(deoxyribonucleotide)m = (deoxyribonucleotide)n+m + AMP + beta-nicotinamide D-nucleotide.. Functionally, DNA ligase that catalyzes the formation of phosphodiester linkages between 5'-phosphoryl and 3'-hydroxyl groups in double-stranded DNA using NAD as a coenzyme and as the energy source for the reaction. It is essential for DNA replication and repair of damaged DNA. In Rhizorhabdus wittichii (strain DSM 6014 / CCUG 31198 / JCM 15750 / NBRC 105917 / EY 4224 / RW1) (Sphingomonas wittichii), this protein is DNA ligase.